Here is a 186-residue protein sequence, read N- to C-terminus: MKIAQELRVGNVFMIGGDPMVVQKAEYNKSGRNAAVVKMKYKNLLTDAPGESVFKADDKFEVVVLERRECTYSYFADPMYVFMDADYNQYEVEKDSMGDSLNYLEDGMNVEVVFYNDKAISVEMPTTLVREIVYTEPAVKGDTSSGKVLKGAKINTGFELQVPLFCNIGDKIEIDTRTGEYRSRAN.

Belongs to the elongation factor P family.

The protein localises to the cytoplasm. The protein operates within protein biosynthesis; polypeptide chain elongation. Involved in peptide bond synthesis. Stimulates efficient translation and peptide-bond synthesis on native or reconstituted 70S ribosomes in vitro. Probably functions indirectly by altering the affinity of the ribosome for aminoacyl-tRNA, thus increasing their reactivity as acceptors for peptidyl transferase. This Cupriavidus necator (strain ATCC 17699 / DSM 428 / KCTC 22496 / NCIMB 10442 / H16 / Stanier 337) (Ralstonia eutropha) protein is Elongation factor P.